Reading from the N-terminus, the 86-residue chain is Large ribosomal subunit protein uL23 (86 aa).

Belongs to the universal ribosomal protein uL23 family. Part of the 50S ribosomal subunit. Contacts protein L29.

Its function is as follows. Binds to 23S rRNA. One of the proteins that surrounds the polypeptide exit tunnel on the outside of the ribosome. The polypeptide is Large ribosomal subunit protein uL23 (Methanocaldococcus jannaschii (strain ATCC 43067 / DSM 2661 / JAL-1 / JCM 10045 / NBRC 100440) (Methanococcus jannaschii)).